Consider the following 739-residue polypeptide: MIPNDVRITPELIAEHGLKPDEYQRILDLIGREPTLTELGIFSAMWNEHCSYKSSKKWLRTLPTTGPRVICGPGENAGVVDIGDGQAIIFKMESHNHPSYIEPHEGAATGVGGILRDVFTMGARPVAALNALRFGAPDHPRTRHIVSGVVAGIGGYGNSFGVPTIGGEVNFDPSYNGNCLVNAFAAGLADADKIFYSEAKGVGLPIVYLGSKTGRDGIHGATMASAEFGENSEEKRPTVQIGDPFSEKLLLEACLELMASGAVIAIQDMGAAGLTCSAVEMGAKGDLGVELDLDKVPCREDGMTAYEMMLSESQERMLMVLDPAKEKEAEAIFVKWGLDFAIIGKTTDDLRFRIKRHGQVMADLPIKDLGDQAPEYDRPWIAPVKPEPLDPSSVPAPNNIGEILVRMLGLPDMCSRRWVWEQYDHLIQGNTAIGPGGDAAVIRVERGPKGLAFTLDVTPRYCAADPREGGKQAVAECWRNLTAVGAEPLAITDNLNFGNPEKPDIMGQFVGCIEGIGDACRALDFPVVSGNVSLYNETNGKGILPTPAIGAVGLLDNFEERVTIAFKAEGEAIVLIGETKGHLGQSIYLRDIAGKTDDRSAPPPVDLAVERRNGDFVRAEIRAGRTTAVHDISDGGILVALAEMAMAGGIGASVKPETALPLHAWAFGEDQARYLVTMPENEAKAFIARAEKAGIPATRLGTTGGNELTLNGGVPISLAGIKAAHEGWLPAYMAAGAEL.

The active site involves H49. The ATP site is built by Y52 and K91. E93 is a Mg(2+) binding site. Residues 94 to 97 and R116 each bind substrate; that span reads SHNH. The active-site Proton acceptor is H95. Residue D117 coordinates Mg(2+). Q240 lines the substrate pocket. D268 contributes to the Mg(2+) binding site. 312-314 is a binding site for substrate; sequence ESQ. 2 residues coordinate ATP: D493 and G530. N531 contributes to the Mg(2+) binding site. S533 contributes to the substrate binding site.

This sequence belongs to the FGAMS family. As to quaternary structure, monomer. Part of the FGAM synthase complex composed of 1 PurL, 1 PurQ and 2 PurS subunits.

It localises to the cytoplasm. The catalysed reaction is N(2)-formyl-N(1)-(5-phospho-beta-D-ribosyl)glycinamide + L-glutamine + ATP + H2O = 2-formamido-N(1)-(5-O-phospho-beta-D-ribosyl)acetamidine + L-glutamate + ADP + phosphate + H(+). The protein operates within purine metabolism; IMP biosynthesis via de novo pathway; 5-amino-1-(5-phospho-D-ribosyl)imidazole from N(2)-formyl-N(1)-(5-phospho-D-ribosyl)glycinamide: step 1/2. In terms of biological role, part of the phosphoribosylformylglycinamidine synthase complex involved in the purines biosynthetic pathway. Catalyzes the ATP-dependent conversion of formylglycinamide ribonucleotide (FGAR) and glutamine to yield formylglycinamidine ribonucleotide (FGAM) and glutamate. The FGAM synthase complex is composed of three subunits. PurQ produces an ammonia molecule by converting glutamine to glutamate. PurL transfers the ammonia molecule to FGAR to form FGAM in an ATP-dependent manner. PurS interacts with PurQ and PurL and is thought to assist in the transfer of the ammonia molecule from PurQ to PurL. The sequence is that of Phosphoribosylformylglycinamidine synthase subunit PurL from Parvibaculum lavamentivorans (strain DS-1 / DSM 13023 / NCIMB 13966).